The sequence spans 217 residues: Adenylate kinase (217 aa).

ATP is bound at residue 10–15; the sequence is GAGKGT. Residues 30–59 are NMP; the sequence is STGDMFRAAMKEETPLGLEAKSYIDKGELV. AMP-binding positions include Thr31, Arg36, 57-59, 85-88, and Gln92; these read ELV and GFPR. An LID region spans residues 126–163; the sequence is GRRICSVCGTTYHLVFNPPKTPGVCDKDGGDLYQRADD. Position 127 (Arg127) interacts with ATP. 2 residues coordinate Zn(2+): Cys130 and Cys133. Residue 136–137 coordinates ATP; it reads TY. The Zn(2+) site is built by Cys150 and Asp153. AMP is bound by residues Arg160 and Arg171. Position 199 (Gln199) interacts with ATP.

This sequence belongs to the adenylate kinase family. In terms of assembly, monomer.

It localises to the cytoplasm. The enzyme catalyses AMP + ATP = 2 ADP. Its pathway is purine metabolism; AMP biosynthesis via salvage pathway; AMP from ADP: step 1/1. In terms of biological role, catalyzes the reversible transfer of the terminal phosphate group between ATP and AMP. Plays an important role in cellular energy homeostasis and in adenine nucleotide metabolism. The protein is Adenylate kinase of Bacillus velezensis (strain DSM 23117 / BGSC 10A6 / LMG 26770 / FZB42) (Bacillus amyloliquefaciens subsp. plantarum).